The sequence spans 642 residues: Threonine--tRNA ligase (642 aa).

The TGS domain occupies 1 to 61 (MIKVTFPDGN…EHDGKLQLLT (61 aa)). The interval 240-539 (DHRKIGKDLD…LIEEYKGSFP (300 aa)) is catalytic. Zn(2+) contacts are provided by C334, H385, and H516.

Belongs to the class-II aminoacyl-tRNA synthetase family. As to quaternary structure, homodimer. It depends on Zn(2+) as a cofactor.

It localises to the cytoplasm. It carries out the reaction tRNA(Thr) + L-threonine + ATP = L-threonyl-tRNA(Thr) + AMP + diphosphate + H(+). Functionally, catalyzes the attachment of threonine to tRNA(Thr) in a two-step reaction: L-threonine is first activated by ATP to form Thr-AMP and then transferred to the acceptor end of tRNA(Thr). Also edits incorrectly charged L-seryl-tRNA(Thr). The chain is Threonine--tRNA ligase from Acholeplasma laidlawii (strain PG-8A).